The sequence spans 179 residues: Alpha-tubulin N-acetyltransferase (179 aa).

One can recognise an N-acetyltransferase domain in the interval 1-175; that stretch reads MRVEVVRAPG…NRFVVFDAYF (175 aa). Residues 109 to 122 and 145 to 154 contribute to the acetyl-CoA site; these read FYVD…GVGL and SPKLFAFLKK.

It belongs to the acetyltransferase ATAT1 family.

It carries out the reaction L-lysyl-[alpha-tubulin] + acetyl-CoA = N(6)-acetyl-L-lysyl-[alpha-tubulin] + CoA + H(+). In terms of biological role, specifically acetylates 'Lys-40' in alpha-tubulin on the lumenal side of microtubules. Promotes microtubule destabilization and accelerates microtubule dynamics; this activity may be independent of acetylation activity. Acetylates alpha-tubulin with a slow enzymatic rate, due to a catalytic site that is not optimized for acetyl transfer. Enters the microtubule through each end and diffuses quickly throughout the lumen of microtubules. Acetylates only long/old microtubules because of its slow acetylation rate since it does not have time to act on dynamically unstable microtubules before the enzyme is released. The chain is Alpha-tubulin N-acetyltransferase from Phytophthora infestans (strain T30-4) (Potato late blight agent).